The chain runs to 134 residues: UPF0357 protein AAL017W (134 aa).

The first 23 residues, 1–23 (MFGLISLWHLFWLAVMAGILVVA), serve as a signal peptide directing secretion.

This sequence belongs to the UPF0357 family.

In Eremothecium gossypii (strain ATCC 10895 / CBS 109.51 / FGSC 9923 / NRRL Y-1056) (Yeast), this protein is UPF0357 protein AAL017W.